The sequence spans 123 residues: Putative membrane protein insertion efficiency factor (123 aa).

Residues 1 to 23 are disordered; sequence MGSCGGKHTGKGAPKPYSRNFTD.

This sequence belongs to the UPF0161 family.

The protein localises to the cell inner membrane. Could be involved in insertion of integral membrane proteins into the membrane. The sequence is that of Putative membrane protein insertion efficiency factor from Brucella ovis (strain ATCC 25840 / 63/290 / NCTC 10512).